Reading from the N-terminus, the 243-residue chain is Trypsin (243 aa).

The signal sequence occupies residues 1–15 (MKFLLLCVLLGAAAA). The propeptide at 16 to 20 (FDDDK) is activation peptide. One can recognise a Peptidase S1 domain in the interval 21-241 (IIGGATCAKS…YNAWIQNTIA (221 aa)). Intrachain disulfides connect Cys-27-Cys-157, Cys-45-Cys-61, Cys-129-Cys-230, Cys-136-Cys-203, Cys-168-Cys-182, and Cys-193-Cys-217. The active-site Charge relay system is the His-60. Glu-72, Asn-74, and Glu-82 together coordinate Ca(2+). Asp-104 serves as the catalytic Charge relay system. Residue Ser-197 is the Charge relay system of the active site.

Belongs to the peptidase S1 family. Ca(2+) serves as cofactor.

It is found in the secreted. Its subcellular location is the extracellular space. It carries out the reaction Preferential cleavage: Arg-|-Xaa, Lys-|-Xaa.. This is Trypsin from Xenopus laevis (African clawed frog).